The chain runs to 91 residues: uncharacterized protein (91 aa).

Residues 1–21 form the signal peptide; it reads MKQLLASPSLQLVTYPASATA.

This sequence belongs to the BhsA/McbA family.

The protein localises to the periplasm. This is an uncharacterized protein from Escherichia coli O157:H7.